An 815-amino-acid chain; its full sequence is (-)-kolavenyl diphosphate synthase TPS10, chloroplastic (815 aa).

Residues 1-50 constitute a chloroplast transit peptide; the sequence is MFMSSSSSSHARRPQLSSFSYLHPPLPFPGLSFSSTRDKRVNFDSTRIIS. Lysine 247 contributes to the substrate binding site. The Mg(2+) site is built by aspartate 379 and aspartate 381. The DXDD motif signature appears at 379–382; the sequence is DIDD. Lysine 465 is a substrate binding site.

It belongs to the terpene synthase family. Tpsc subfamily. Mg(2+) is required as a cofactor.

Its subcellular location is the plastid. The protein localises to the chloroplast. The enzyme catalyses (2E,6E,10E)-geranylgeranyl diphosphate = (-)-kolavenyl diphosphate. Inhibited by high concentrations of magnesium. Its function is as follows. Diterpene synthase that catalyzes the formation of (-)-kolavenyl diphosphate from geranylgeranyl diphosphate (GGPP). This chain is (-)-kolavenyl diphosphate synthase TPS10, chloroplastic, found in Tripterygium wilfordii (Thunder God vine).